Consider the following 364-residue polypeptide: Spermidine/putrescine import ATP-binding protein PotA (364 aa).

Positions 6 to 236 (IEIRQIYKSY…PANLHVAMFI (231 aa)) constitute an ABC transporter domain. 38-45 (GPSGCGKT) lines the ATP pocket.

The protein belongs to the ABC transporter superfamily. Spermidine/putrescine importer (TC 3.A.1.11.1) family. In terms of assembly, the complex is composed of two ATP-binding proteins (PotA), two transmembrane proteins (PotB and PotC) and a solute-binding protein (PotD).

It is found in the cell inner membrane. The catalysed reaction is ATP + H2O + polyamine-[polyamine-binding protein]Side 1 = ADP + phosphate + polyamineSide 2 + [polyamine-binding protein]Side 1.. Its function is as follows. Part of the ABC transporter complex PotABCD involved in spermidine/putrescine import. Responsible for energy coupling to the transport system. The polypeptide is Spermidine/putrescine import ATP-binding protein PotA (Legionella pneumophila (strain Lens)).